The following is a 503-amino-acid chain: Aminoaldehyde dehydrogenase 2, peroxisomal (503 aa).

2 residues coordinate Na(+): Ile-28 and Asp-99. Trp-161 and Lys-185 together coordinate NAD(+). Leu-189 provides a ligand contact to Na(+). Residue Ser-239 coordinates NAD(+). Glu-260 functions as the Proton acceptor in the catalytic mechanism. Cys-294 (nucleophile) is an active-site residue. A Microbody targeting signal motif is present at residues 501–503 (AKL).

It belongs to the aldehyde dehydrogenase family. Forms homodimers.

Its subcellular location is the peroxisome. The enzyme catalyses 3-aminopropanal + NAD(+) + H2O = beta-alanine + NADH + 2 H(+). It carries out the reaction 4-aminobutanal + NAD(+) + H2O = 4-aminobutanoate + NADH + 2 H(+). The catalysed reaction is 4-guanidinobutanal + NAD(+) + H2O = 4-guanidinobutanoate + NADH + 2 H(+). The protein operates within amine and polyamine biosynthesis; betaine biosynthesis via choline pathway; betaine from betaine aldehyde: step 1/1. Its function is as follows. Dehydrogenase that catalyzes the oxidation of several aminoaldehydes. Metabolizes and detoxifies aldehyde products of polyamine degradation to non-toxic amino acids. Catalyzes the oxidation of 3-aminopropanal to beta-alanine. Catalyzes the oxidation of 4-aminobutanal to 4-aminobutanoate. Catalyzes the oxidation of 4-guanidinobutanal to 4-guanidinobutanoate. The protein is Aminoaldehyde dehydrogenase 2, peroxisomal of Pisum sativum (Garden pea).